Consider the following 379-residue polypeptide: Leukocyte elastase inhibitor (379 aa).

N-acetylmethionine is present on Met1. 2 positions are modified to N6-acetyllysine: Lys137 and Lys177. Phosphoserine is present on Ser300. The CARD-binding motif (CBM) stretch occupies residues 351-379; the sequence is NFTADHPFLFFIRHNSSGSILFLGRFSSP.

This sequence belongs to the serpin family. Ov-serpin subfamily. Monomer. Interacts (via C-terminus) with CASP1; CASP4 (via CARD domain) and CASP5; these interactions regulate the activity of inflammatory caspases. Interacts with PRTN3. Interacts with GZMH. As to expression, in human bone marrow, present in all CD45+ populations. Expression levels are highest in the neutrophil lineage, intermediate in monocytic, and lowest in lymphocytic lineage. Within the neutrophil lineage, expression is highest in promyelocytes.

It is found in the secreted. Its subcellular location is the cytoplasm. It localises to the cytolytic granule. The protein resides in the early endosome. Functionally, neutrophil serine protease inhibitor that plays an essential role in the regulation of the innate immune response, inflammation and cellular homeostasis. Acts primarily to protect the cell from proteases released in the cytoplasm during stress or infection. These proteases are important in killing microbes but when released from granules, these potent enzymes also destroy host proteins and contribute to mortality. Regulates the activity of the neutrophil proteases elastase, cathepsin G, proteinase-3, chymase, chymotrypsin, and kallikrein-3. Also acts as a potent intracellular inhibitor of GZMH by directly blocking its proteolytic activity. During inflammation, limits the activity of inflammatory caspases CASP1, CASP4 and CASP5 by suppressing their caspase-recruitment domain (CARD) oligomerization and enzymatic activation. When secreted, promotes the proliferation of beta-cells via its protease inhibitory function. This Homo sapiens (Human) protein is Leukocyte elastase inhibitor (SERPINB1).